The primary structure comprises 87 residues: Small ribosomal subunit protein bS20 (87 aa).

Basic residues predominate over residues 1 to 11; it reads MANIKSKKKRI. The interval 1-25 is disordered; that stretch reads MANIKSKKKRIKTNEKARQRNKAIR.

It belongs to the bacterial ribosomal protein bS20 family.

Functionally, binds directly to 16S ribosomal RNA. The chain is Small ribosomal subunit protein bS20 from Corynebacterium kroppenstedtii (strain DSM 44385 / JCM 11950 / CIP 105744 / CCUG 35717).